Here is a 475-residue protein sequence, read N- to C-terminus: Sulfate adenylyltransferase subunit 1 (475 aa).

The tr-type G domain maps to 25–239; it reads KSLLRFLTCG…EVLETVEIQR (215 aa). The interval 34–41 is G1; sequence GSVDDGKS. 34–41 is a binding site for GTP; that stretch reads GSVDDGKS. Residues 92–96 are G2; that stretch reads GITID. The interval 113-116 is G3; that stretch reads DTPG. Residues 113–117 and 168–171 each bind GTP; these read DTPGH and NKMD. The tract at residues 168-171 is G4; sequence NKMD. Positions 206 to 208 are G5; it reads SAL.

This sequence belongs to the TRAFAC class translation factor GTPase superfamily. Classic translation factor GTPase family. CysN/NodQ subfamily. Heterodimer composed of CysD, the smaller subunit, and CysN.

The catalysed reaction is sulfate + ATP + H(+) = adenosine 5'-phosphosulfate + diphosphate. Its pathway is sulfur metabolism; hydrogen sulfide biosynthesis; sulfite from sulfate: step 1/3. Functionally, with CysD forms the ATP sulfurylase (ATPS) that catalyzes the adenylation of sulfate producing adenosine 5'-phosphosulfate (APS) and diphosphate, the first enzymatic step in sulfur assimilation pathway. APS synthesis involves the formation of a high-energy phosphoric-sulfuric acid anhydride bond driven by GTP hydrolysis by CysN coupled to ATP hydrolysis by CysD. The sequence is that of Sulfate adenylyltransferase subunit 1 from Escherichia coli (strain UTI89 / UPEC).